The sequence spans 77 residues: Large ribosomal subunit protein uL29 (77 aa).

The protein belongs to the universal ribosomal protein uL29 family.

The chain is Large ribosomal subunit protein uL29 from Gluconobacter oxydans (strain 621H) (Gluconobacter suboxydans).